The sequence spans 54 residues: Rubredoxin (54 aa).

In terms of domain architecture, Rubredoxin-like spans 1 to 54 (MKKYVCVVCGYIYDPAEGDPDNGVNPGTSFEDIPDDWVCPLCGVGKDQFEPSEE). Positions 6, 9, 39, and 42 each coordinate Fe cation.

The protein belongs to the rubredoxin family. Requires Fe(3+) as cofactor.

Its function is as follows. Rubredoxin is a small nonheme, iron protein lacking acid-labile sulfide. Its single Fe, chelated to 4 Cys, functions as an electron acceptor and may also stabilize the conformation of the molecule. Functions as an intermediate component in the electron transfer chain: NADH-&gt;NROR-&gt;Rd-&gt;FprA1/2 in which Rd serves as the proximal electron donor to the FDPs that exhibit H(2)O-forming NADH oxidase activity. Also functions as the proximal electron donor to the Dfx and revRbr proteins that display superoxide reductase (SOR) and NADH peroxidase activity, respectively. Therefore, is a key electron carrier in an efficient multienzyme complex that can scavenge O(2) and reactive oxygen species (ROS), and thus plays an important role in the oxidative stress defense system in C.acetobutylicum, an obligate anaerobic bacterium. In Clostridium acetobutylicum (strain ATCC 824 / DSM 792 / JCM 1419 / IAM 19013 / LMG 5710 / NBRC 13948 / NRRL B-527 / VKM B-1787 / 2291 / W), this protein is Rubredoxin (rd).